A 291-amino-acid chain; its full sequence is Oligopeptide transport system permease protein OppC (291 aa).

Transmembrane regions (helical) follow at residues 22 to 42, 85 to 105, 116 to 136, 142 to 162, 209 to 229, and 247 to 267; these read VASLAALLLLFVSAYALPPLL, MLIGVCVAVISTGIAATVGAI, TLMWVVDLLLVVPSFILIAIV, NSANIMFLVLLLAGFGWMISS, ALNVAAAILAETGLSFLGFGI, and ATAFPWVFLFPASILVLILVC. The region spanning 81 to 272 is the ABC transmembrane type-1 domain; sequence MQKSMLIGVC…LILVCANLTG (192 aa).

It belongs to the binding-protein-dependent transport system permease family. OppBC subfamily. As to quaternary structure, the complex is composed of an ATP-binding protein (OppD), two transmembrane proteins (OppB and OppC) and a solute-binding protein (OppA).

The protein resides in the cell inner membrane. Part of the ABC transporter complex OppABCD involved in the uptake of oligopeptides. Responsible for the translocation of the substrate across the membrane. The polypeptide is Oligopeptide transport system permease protein OppC (Mycobacterium bovis (strain ATCC BAA-935 / AF2122/97)).